Reading from the N-terminus, the 448-residue chain is Immunoglobulin G-binding protein G (448 aa).

The first 33 residues, 1–33 (MEKEKKVKYFLRKSAFGLASVSAAFLVGSTVFA), serve as a signal peptide directing secretion. 4 consecutive repeat copies span residues 104–140 (LAKAKADALKEFNKYGVSDYYKNLINNAKTVEGIKDL), 179–215 (LAEAKVLANRELDKYGVSDYHKNLINNAKTVEGVKEL), 228–282 (TYKL…TVTE), and 298–352 (TYKL…TVTE). The interval 104–215 (LAKAKADALK…AKTVEGVKEL (112 aa)) is 2 X 37 AA repeats. Residues 228–352 (TYKLILNGKT…DATKTFTVTE (125 aa)) are 2 X 55 AA repeats. Residues 358-422 (PGDAPTEPEK…TLPTTGEGSN (65 aa)) are disordered. Residues 384–412 (AKDDAKKDDTKKEDAKKPEAKKDDAKKAE) are compositionally biased toward basic and acidic residues. The tract at residues 386-410 (DDAKKDDTKKEDAKKPEAKKDDAKK) is 5 X 5 AA repeats of [DE]-D-A-K-K. An LPXTG sorting signal motif is present at residues 414–418 (LPTTG). Threonine 417 carries the pentaglycyl murein peptidoglycan amidated threonine modification. Positions 418-448 (GEGSNPFFTAAALAVMAGAGALAVASKRKED) are cleaved as a propeptide — removed by sortase.

The protein resides in the secreted. It is found in the cell wall. Binds to the constant Fc region of IgG with high affinity. The sequence is that of Immunoglobulin G-binding protein G (spg) from Streptococcus sp. group G.